Here is a 1244-residue protein sequence, read N- to C-terminus: Ras-specific guanine nucleotide-releasing factor 2 (1244 aa).

Residues 22 to 129 form the PH 1 domain; it reads EGTKRGYLSK…WVEAIQQASY (108 aa). Positions 147–189 form a coiled coil; the sequence is VQIVETEKVAANQLRTQLEDQDTEIERLKAEIIALNKTKERMR. The region spanning 201–230 is the IQ domain; that stretch reads DIKKIKKVQSFMRGWLCRRKWKIIVQDYIC. One can recognise a DH domain in the interval 239-425; the sequence is KRNQIVFNMV…EELSRVMHDE (187 aa). Residues 466–584 form the PH 2 domain; it reads PSVERGKLSK…WTSDISQCID (119 aa). Positions 631 to 745 constitute an N-terminal Ras-GEF domain; sequence KVPQIRYASV…PVRTRKLSLN (115 aa). Disordered regions lie at residues 704–743, 759–814, and 843–879; these read NRSGDHVNDKSPRLCRKFSSPPPLSISSRTSSPVRTRKLS, TTSS…NAEV, and PESPQASEPGEISPCRSPSTPRHLRYRQSGVQTAENS. A compositionally biased stretch (basic and acidic residues) spans 706–715; that stretch reads SGDHVNDKSP. Polar residues predominate over residues 728-743; the sequence is SISSRTSSPVRTRKLS. Low complexity-rich tracts occupy residues 759 to 774 and 781 to 806; these read TTSSSAASSPTSANPT and NNNNNSKPPLDLSRGQSPSSPEQSPG. A Ras-GEF domain is found at 1009 to 1241; it reads SAMEIAEQIT…YDLSLKIEPR (233 aa).

The protein localises to the cytoplasm. It is found in the cell membrane. Its subcellular location is the endoplasmic reticulum membrane. In terms of biological role, functions as a calcium-regulated nucleotide exchange factor activating both Ras and rac1 through the exchange of bound GDP for GTP. May function in synaptic plasticity. This is Ras-specific guanine nucleotide-releasing factor 2 (rasgrf2) from Danio rerio (Zebrafish).